Reading from the N-terminus, the 221-residue chain is NAD(P)H-hydrate epimerase (221 aa).

The YjeF N-terminal domain occupies 10–211 (MQQYDQYTIN…DIGIYSPAEL (202 aa)). 58–62 (NNGGD) lines the (6S)-NADPHX pocket. Residues asparagine 59 and aspartate 121 each contribute to the K(+) site. (6S)-NADPHX contacts are provided by residues 125 to 131 (GIGLSKP) and aspartate 154. Position 157 (serine 157) interacts with K(+).

This sequence belongs to the NnrE/AIBP family. It depends on K(+) as a cofactor.

The enzyme catalyses (6R)-NADHX = (6S)-NADHX. It catalyses the reaction (6R)-NADPHX = (6S)-NADPHX. Functionally, catalyzes the epimerization of the S- and R-forms of NAD(P)HX, a damaged form of NAD(P)H that is a result of enzymatic or heat-dependent hydration. This is a prerequisite for the S-specific NAD(P)H-hydrate dehydratase to allow the repair of both epimers of NAD(P)HX. This is NAD(P)H-hydrate epimerase from Weissella koreensis (strain KACC 15510).